The chain runs to 349 residues: UDP-3-O-acylglucosamine N-acyltransferase (349 aa).

The active-site Proton acceptor is the histidine 242.

The protein belongs to the transferase hexapeptide repeat family. LpxD subfamily. As to quaternary structure, homotrimer.

It catalyses the reaction a UDP-3-O-[(3R)-3-hydroxyacyl]-alpha-D-glucosamine + a (3R)-hydroxyacyl-[ACP] = a UDP-2-N,3-O-bis[(3R)-3-hydroxyacyl]-alpha-D-glucosamine + holo-[ACP] + H(+). It functions in the pathway bacterial outer membrane biogenesis; LPS lipid A biosynthesis. Its function is as follows. Catalyzes the N-acylation of UDP-3-O-acylglucosamine using 3-hydroxyacyl-ACP as the acyl donor. Is involved in the biosynthesis of lipid A, a phosphorylated glycolipid that anchors the lipopolysaccharide to the outer membrane of the cell. The chain is UDP-3-O-acylglucosamine N-acyltransferase from Cytophaga hutchinsonii (strain ATCC 33406 / DSM 1761 / CIP 103989 / NBRC 15051 / NCIMB 9469 / D465).